A 278-amino-acid polypeptide reads, in one-letter code: Putative ABC transporter ATP-binding protein MJ1572 (278 aa).

Residues 5 to 242 (YRLVDVSYKY…LDELNLDVPE (238 aa)) form the ABC transporter domain. 38–45 (GPNGAGKT) is a binding site for ATP.

It belongs to the ABC transporter superfamily.

It localises to the cell membrane. Its function is as follows. Probably part of an ABC transporter complex. Responsible for energy coupling to the transport system. This is Putative ABC transporter ATP-binding protein MJ1572 from Methanocaldococcus jannaschii (strain ATCC 43067 / DSM 2661 / JAL-1 / JCM 10045 / NBRC 100440) (Methanococcus jannaschii).